The chain runs to 456 residues: tRNA modification GTPase MnmE (456 aa).

(6S)-5-formyl-5,6,7,8-tetrahydrofolate contacts are provided by R25, E87, and R126. The TrmE-type G domain maps to 221–377; the sequence is GLKVAIVGQP…LENAIIEQVN (157 aa). K(+) is bound at residue N231. GTP-binding positions include 231 to 236, 250 to 256, and 275 to 278; these read NVGKSS, TDLPGTT, and DTAG. S235 lines the Mg(2+) pocket. K(+) is bound by residues T250, L252, and T255. T256 provides a ligand contact to Mg(2+). K456 contacts (6S)-5-formyl-5,6,7,8-tetrahydrofolate.

This sequence belongs to the TRAFAC class TrmE-Era-EngA-EngB-Septin-like GTPase superfamily. TrmE GTPase family. In terms of assembly, homodimer. Heterotetramer of two MnmE and two MnmG subunits. It depends on K(+) as a cofactor.

The protein resides in the cytoplasm. In terms of biological role, exhibits a very high intrinsic GTPase hydrolysis rate. Involved in the addition of a carboxymethylaminomethyl (cmnm) group at the wobble position (U34) of certain tRNAs, forming tRNA-cmnm(5)s(2)U34. This is tRNA modification GTPase MnmE from Synechocystis sp. (strain ATCC 27184 / PCC 6803 / Kazusa).